We begin with the raw amino-acid sequence, 363 residues long: Cobalt-precorrin-5B C(1)-methyltransferase (363 aa).

This sequence belongs to the CbiD family.

It catalyses the reaction Co-precorrin-5B + S-adenosyl-L-methionine = Co-precorrin-6A + S-adenosyl-L-homocysteine. It participates in cofactor biosynthesis; adenosylcobalamin biosynthesis; cob(II)yrinate a,c-diamide from sirohydrochlorin (anaerobic route): step 6/10. Functionally, catalyzes the methylation of C-1 in cobalt-precorrin-5B to form cobalt-precorrin-6A. The protein is Cobalt-precorrin-5B C(1)-methyltransferase of Burkholderia mallei (strain ATCC 23344).